The sequence spans 355 residues: MAVTANVGTIFPVVWAGDRVQLIDQTRLPEQYELREITTAAEMATAIRTMIVRGAPAIGVAAAFGMVLGAREYRGSDREGFLIHLENIASQLRQTRPTAVNLFWAIDRLLAAAQQPTPTLEELQQHLLETAQTIAREDVQTCQAIGKNGLGVLPKTPEKLRLLTHCNAGALATAGYGTALGVVRAAWAAGRLERLYADETRPRLQGAKLTAWECVQEGIPVTLIADTMAAHCMQRGMIDAVVVGADRIALNGDTANKIGTYSVALAAKAHNIPFFVAAPLSTIDTSIATGAEIPIEERHPQEIYQVGFSRITPAGVDFYNPAFDVTPAHLISGIITELGVFAPVDLARGIGAVSG.

Residues 53 to 55 (RGA), arginine 96, and glutamine 205 contribute to the substrate site. The active-site Proton donor is the aspartate 246. 256–257 (NK) contacts substrate.

Belongs to the eIF-2B alpha/beta/delta subunits family. MtnA subfamily.

The enzyme catalyses 5-(methylsulfanyl)-alpha-D-ribose 1-phosphate = 5-(methylsulfanyl)-D-ribulose 1-phosphate. It functions in the pathway amino-acid biosynthesis; L-methionine biosynthesis via salvage pathway; L-methionine from S-methyl-5-thio-alpha-D-ribose 1-phosphate: step 1/6. In terms of biological role, catalyzes the interconversion of methylthioribose-1-phosphate (MTR-1-P) into methylthioribulose-1-phosphate (MTRu-1-P). This Thermosynechococcus vestitus (strain NIES-2133 / IAM M-273 / BP-1) protein is Methylthioribose-1-phosphate isomerase.